Here is a 381-residue protein sequence, read N- to C-terminus: Homoserine O-succinyltransferase (381 aa).

One can recognise an AB hydrolase-1 domain in the interval 45-360 (NAVLVCHALN…PHGHDAFLLD (316 aa)). S151 acts as the Nucleophile in catalysis. R221 contacts substrate. Active-site residues include D321 and H354. D355 lines the substrate pocket.

This sequence belongs to the AB hydrolase superfamily. MetX family. As to quaternary structure, homodimer.

Its subcellular location is the cytoplasm. It carries out the reaction L-homoserine + succinyl-CoA = O-succinyl-L-homoserine + CoA. Its pathway is amino-acid biosynthesis; L-methionine biosynthesis via de novo pathway; O-succinyl-L-homoserine from L-homoserine: step 1/1. Transfers a succinyl group from succinyl-CoA to L-homoserine, forming succinyl-L-homoserine. The sequence is that of Homoserine O-succinyltransferase from Burkholderia ambifaria (strain MC40-6).